The following is a 263-amino-acid chain: Receptor-transporting protein 1 (263 aa).

Topologically, residues M1 to S238 are cytoplasmic. The segment at A88–G197 adopts a 3CxxC-type zinc-finger fold. Residues I239–F259 traverse the membrane as a helical segment. Topologically, residues R260 to V263 are extracellular.

It belongs to the TMEM7 family. As to quaternary structure, interacts with olfactory receptors.

It localises to the cell membrane. Functionally, specifically promotes functional cell surface expression of olfactory receptors, but not of other GPCRs. In Macaca fascicularis (Crab-eating macaque), this protein is Receptor-transporting protein 1 (RTP1).